We begin with the raw amino-acid sequence, 1253 residues long: Cytoplasmic FMR1-interacting protein 2 (1253 aa).

This sequence belongs to the CYFIP family.

The protein localises to the cytoplasm. Its function is as follows. Involved in T-cell adhesion and p53-dependent induction of apoptosis. Does not bind RNA. The polypeptide is Cytoplasmic FMR1-interacting protein 2 (cyfip2) (Xenopus laevis (African clawed frog)).